The following is a 330-amino-acid chain: Induced myeloid leukemia cell differentiation protein Mcl-1 homolog (330 aa).

The tract at residues 85–155 (LAVPPEEMAA…PPEEEDDELY (71 aa)) is PEST-like. At Ser-101 the chain carries Phosphoserine. Lys-116 is covalently cross-linked (Glycyl lysine isopeptide (Lys-Gly) (interchain with G-Cter in ubiquitin)). A disordered region spans residues 129–153 (EAAKSSGADGSLPSTPPPPEEEDDE). Ser-139 is modified (phosphoserine; by GSK3-alpha and GSK3-beta). Ser-142 bears the Phosphoserine mark. Thr-143 carries the phosphothreonine; by MAPK modification. Residues Lys-174 and Lys-177 each participate in a glycyl lysine isopeptide (Lys-Gly) (interchain with G-Cter in ubiquitin) cross-link. Residues 189 to 203 (ALETLRRVGDGVQRN) carry the BH3 motif. The BH1 motif lies at 232–252 (HVFKDGVTNWGRIVTLISFGA). The short motif at 284-299 (DWLVKQRGWDGFVEFF) is the BH2 element. The chain crosses the membrane as a helical span at residues 307-329 (GIRNVLLAFAGVAGVGAGLAYLI).

This sequence belongs to the Bcl-2 family. In terms of assembly, interacts with HIF3A (via C-terminus domain). Interacts with BOK, BIK, BAX, BAK1, and TPT1. Interacts with unphosphorylated BAD. Interacts with BMF, BBC3 and PMAIP1. Interacts with BOP. Interacts with BCL2L11; may sequester BCL2L11 to prevent its pro-apoptotic activity. Interacts with GIMAP5 and HSPA8/HSC70; the interaction between HSPA8 and MCL1 is impaired in the absence of GIMAP5. Cleaved by CASP3 during apoptosis, yielding a pro-apoptotic C-terminal fragment. In terms of processing, rapidly degraded in the absence of phosphorylation in the PEST region. Post-translationally, phosphorylated on Ser-139, by GSK3, in response to IL3/interleukin-3 withdrawal. Phosphorylation at Ser-139 induces ubiquitination and proteasomal degradation, abrogating the anti-apoptotic activity. Treatment with taxol or okadaic acid induces phosphorylation on additional sites. Ubiquitinated. Ubiquitination is induced by phosphorylation at Ser-139. Deubiquitinated by USP20; leading to increased stability. Ubiquitous. Highly expressed in heart, spleen, lung, liver, skeletal muscle and kidney. Detected at lower levels in brain, ovary, oviduct and testis.

It is found in the membrane. The protein resides in the cytoplasm. It localises to the mitochondrion. The protein localises to the nucleus. Its subcellular location is the nucleoplasm. Involved in the regulation of apoptosis versus cell survival, and in the maintenance of viability but not of proliferation. Mediates its effects by interactions with a number of other regulators of apoptosis. In Rattus norvegicus (Rat), this protein is Induced myeloid leukemia cell differentiation protein Mcl-1 homolog (Mcl1).